The sequence spans 54 residues: Light-harvesting protein B-880 beta chain (54 aa).

The Cytoplasmic portion of the chain corresponds to 1–20 (AEDRSSLSGVSDAEAKEFHA). The a bacteriochlorophyll site is built by His19 and His37. Residues 21–43 (LFVSSFMGFMVVAVLAHVLAWAW) traverse the membrane as a helical segment. At 44-54 (RPWIPGPKGWA) the chain is on the periplasmic side.

It belongs to the antenna complex beta subunit family. As to quaternary structure, the core complex is formed by different alpha and beta chains, binding bacteriochlorophyll molecules, and arranged most probably in tetrameric structures disposed around the reaction center. The non-pigmented gamma chains may constitute additional components.

It is found in the cell inner membrane. Its function is as follows. Antenna complexes are light-harvesting systems, which transfer the excitation energy to the reaction centers. The chain is Light-harvesting protein B-880 beta chain from Rhodoblastus acidophilus (Rhodopseudomonas acidophila).